A 94-amino-acid chain; its full sequence is Co-chaperonin GroES (94 aa).

Belongs to the GroES chaperonin family. In terms of assembly, heptamer of 7 subunits arranged in a ring. Interacts with the chaperonin GroEL.

The protein localises to the cytoplasm. Together with the chaperonin GroEL, plays an essential role in assisting protein folding. The GroEL-GroES system forms a nano-cage that allows encapsulation of the non-native substrate proteins and provides a physical environment optimized to promote and accelerate protein folding. GroES binds to the apical surface of the GroEL ring, thereby capping the opening of the GroEL channel. This is Co-chaperonin GroES from Lactococcus lactis subsp. cremoris (strain SK11).